Consider the following 720-residue polypeptide: MCGIFGYCNFLIEKTRGEIIDTLIEGLQALEYKEYDSSGISIQGDELKSLNIYKQTGKISSLKEEIDLYNLNKNLPFISHCGIAHTRRATHGGLRRANCHPHNSDPSNEFVVVHNGVITNFANLKALLVAKGYVFKSDTDTECIPKLYKHIYDTSIELGYNLDFHVLTNLVLKELEGSYGLLCTSSHFPDEVVAARKGSPLVIGVKGKTDMDVNFVEVEYLDQEEDYLKLNTQTKSSGNVLAAAPVKYNTCLRKSPPLRSQYLRNSTTSTFNHGSSTETPAENGLPRPMEFYLSSDCASLARYVSKVVYLEDNDIAHIYDGELHIHCSKIGSEDFSFRTVQKLELELSKIKKGPYDNFMQKEIYEQCETTKNVMRGRVDAFTNRVVLGGLENWLTELRRAKRIIMIASKSSFHSCLAARPIFEELMEVPVNVELALDFVDRNCCIFRNDVCIFVSRSGETTDTINALNYCIKKEAVTIGVVNCSGSSISRFTHCGVHTNTGPEKGIATTKSYTSQYIALVMIALWMSEDLVSKIERRKEIIQALTIIPSQIKEVLELEPLIIELCDKKLKQHDTFLLLGRGYQFASALEGASKMKEISYVHSESILTDELGHRVLAVASDNPPIIAFATKDAFSPKIASCIDQIIERKGNPIIICNKGHKIWEQDKQKGNVVTLEVPQTVDCLQGILNVIPLQLISYWLAIKKDIGVDLPRDSAMSAPDI.

Cysteine 2 functions as the Nucleophile; for GATase activity in the catalytic mechanism. A Glutamine amidotransferase type-2 domain is found at 2 to 321 (CGIFGYCNFL…DNDIAHIYDG (320 aa)). Residues 266–280 (STTSTFNHGSSTETP) are compositionally biased toward polar residues. Residues 266-285 (STTSTFNHGSSTETPAENGL) are disordered. 2 SIS domains span residues 393–532 (WLTE…DLVS) and 565–710 (CDKK…VDLP).

It catalyses the reaction D-fructose 6-phosphate + L-glutamine = D-glucosamine 6-phosphate + L-glutamate. The protein operates within nucleotide-sugar biosynthesis; UDP-N-acetyl-alpha-D-glucosamine biosynthesis; alpha-D-glucosamine 6-phosphate from D-fructose 6-phosphate: step 1/1. Its function is as follows. Involved in amino sugar synthesis (formation of chitin, supplies the amino sugars of asparagine-linked oligosaccharides of glycoproteins). The chain is Putative glutamine--fructose-6-phosphate aminotransferase [isomerizing] from Saccharomyces cerevisiae (strain RM11-1a) (Baker's yeast).